A 481-amino-acid chain; its full sequence is Arf-GAP domain and FG repeat-containing protein 2 (481 aa).

The Arf-GAP domain occupies 27–153 (EVWCRRVREL…WYVPPDQVKG (127 aa)). The segment at 47-70 (CFECAQRGVTYVDITVGSFVCTTC) adopts a C4-type zinc-finger fold. Disordered regions lie at residues 150–220 (QVKG…SVKK), 271–309 (SSVF…APAS), and 431–481 (QQNG…NPFL). A compositionally biased stretch (polar residues) spans 157-166 (TKGSASTPVQ). At K173 the chain carries N6-acetyllysine. Polar residues-rich tracts occupy residues 188–210 (VAAS…ARST), 283–298 (ASFQ…SQGT), and 454–481 (AGIS…NPFL).

In terms of assembly, interacts with EPS15R.

The protein is Arf-GAP domain and FG repeat-containing protein 2 (AGFG2) of Homo sapiens (Human).